Consider the following 753-residue polypeptide: 5-methyltetrahydropteroyltriglutamate--homocysteine methyltransferase (753 aa).

5-methyltetrahydropteroyltri-L-glutamate-binding positions include 17–20 and K117; that span reads RELK. L-homocysteine is bound by residues 431–433 and E484; that span reads IGS. Residues 431–433 and E484 each bind L-methionine; that span reads IGS. Residues 515–516 and W561 each bind 5-methyltetrahydropteroyltri-L-glutamate; that span reads RC. An L-homocysteine-binding site is contributed by D599. D599 is a binding site for L-methionine. Residue E605 participates in 5-methyltetrahydropteroyltri-L-glutamate binding. Zn(2+) contacts are provided by H641, C643, and E665. H694 acts as the Proton donor in catalysis. C726 serves as a coordination point for Zn(2+).

This sequence belongs to the vitamin-B12 independent methionine synthase family. It depends on Zn(2+) as a cofactor.

The catalysed reaction is 5-methyltetrahydropteroyltri-L-glutamate + L-homocysteine = tetrahydropteroyltri-L-glutamate + L-methionine. The protein operates within amino-acid biosynthesis; L-methionine biosynthesis via de novo pathway; L-methionine from L-homocysteine (MetE route): step 1/1. Catalyzes the transfer of a methyl group from 5-methyltetrahydrofolate to homocysteine resulting in methionine formation. This is 5-methyltetrahydropteroyltriglutamate--homocysteine methyltransferase from Shigella flexneri serotype 5b (strain 8401).